The following is a 458-amino-acid chain: Translation initiation factor eIF2B subunit gamma (458 aa).

A Phosphoserine modification is found at Ser-291.

Belongs to the eIF-2B gamma/epsilon subunits family. As to quaternary structure, component of the translation initiation factor 2B (eIF2B) complex which is a heterodecamer of two sets of five different subunits: alpha, beta, gamma, delta and epsilon. Subunits alpha, beta and delta comprise a regulatory subcomplex and subunits epsilon and gamma comprise a catalytic subcomplex. Within the complex, the hexameric regulatory complex resides at the center, with the two heterodimeric catalytic subcomplexes bound on opposite sides.

Its subcellular location is the cytoplasm. The protein localises to the cytosol. Its function is as follows. Acts as a component of the translation initiation factor 2B (eIF2B) complex, which catalyzes the exchange of GDP for GTP on the eukaryotic initiation factor 2 (eIF2) complex gamma subunit. Its guanine nucleotide exchange factor activity is repressed when bound to eIF2 complex phosphorylated on the alpha subunit, thereby limiting the amount of methionyl-initiator methionine tRNA available to the ribosome and consequently global translation is repressed. This Schizosaccharomyces pombe (strain 972 / ATCC 24843) (Fission yeast) protein is Translation initiation factor eIF2B subunit gamma (tif223).